Consider the following 499-residue polypeptide: Putative sodium-dependent excitatory amino acid transporter glt-4 (499 aa).

The Cytoplasmic segment spans residues 1–7 (MAKLSKE). 3 helical membrane passes run 8-28 (NLLLLFTVLGVVVGIGLGFSL), 50-70 (FVQMLKMLILPMIMSSIITSL), and 87-107 (IYYTLTTFFAVFLGIVLVSVI). Asn-165 carries an N-linked (GlcNAc...) asparagine glycan. The next 3 membrane-spanning stretches (helical) occupy residues 194–217 (VSDGMNILGLVVFSVALGIVIGVI), 227–254 (FFKSLEACSMKLIGWVIIYSPVGITFLI), and 276–297 (ITVILGLLIHAFVVIPLLCVVL). An intramembrane region (discontinuously helical) is located at residues 303–333 (IKFVGGMAQALLTALATSSSSATLPLSIKCC). 320 to 322 (SSS) contacts L-aspartate. The helical transmembrane segment at 343–369 (VTRFVLPLGATINMDGTALYEAVAAIY) threads the bilayer. Residues Gly-351, Thr-353, and Asn-355 each contribute to the Na(+) site. L-aspartate is bound by residues Thr-359, 400–404 (IPQAG), Asp-433, and Asn-440. Positions 383–416 (VVLVSLTATLASIGAAGIPQAGIVTMIMVLIAIG) form an intramembrane region, discontinuously helical. A helical membrane pass occupies residues 430–451 (FMLDRLRTTVNVHGDSIATAVI). Na(+) contacts are provided by Asn-440 and Asp-444.

This sequence belongs to the dicarboxylate/amino acid:cation symporter (DAACS) (TC 2.A.23) family.

It is found in the cell membrane. Functionally, sodium-dependent, high-affinity amino acid transporter that mediates the uptake of L-glutamate and also L-aspartate and D-aspartate. Functions as a symporter that transports one amino acid molecule together with two or three Na(+) ions and one proton, in parallel with the counter-transport of one K(+) ion. Mediates Cl(-) flux that is not coupled to amino acid transport; this avoids the accumulation of negative charges due to aspartate and Na(+) symport. The polypeptide is Putative sodium-dependent excitatory amino acid transporter glt-4 (glt-4) (Caenorhabditis elegans).